We begin with the raw amino-acid sequence, 244 residues long: Type III pantothenate kinase (244 aa).

Position 11 to 18 (11 to 18 (DAGNTSIK)) interacts with ATP. Substrate is bound by residues Tyr90 and 97-100 (GIDR). Catalysis depends on Asp99, which acts as the Proton acceptor. A K(+)-binding site is contributed by Asp119. Thr122 is a binding site for ATP. Residue Thr175 participates in substrate binding.

The protein belongs to the type III pantothenate kinase family. As to quaternary structure, homodimer. NH4(+) serves as cofactor. The cofactor is K(+).

The protein localises to the cytoplasm. The catalysed reaction is (R)-pantothenate + ATP = (R)-4'-phosphopantothenate + ADP + H(+). Its pathway is cofactor biosynthesis; coenzyme A biosynthesis; CoA from (R)-pantothenate: step 1/5. In terms of biological role, catalyzes the phosphorylation of pantothenate (Pan), the first step in CoA biosynthesis. This Marinomonas sp. (strain MWYL1) protein is Type III pantothenate kinase.